Reading from the N-terminus, the 465-residue chain is Beta-1,2-xylosyltransferase XYXT1 (465 aa).

Residues 1–11 (MKAAVRSKKSK) lie on the Cytoplasmic side of the membrane. Residues 12 to 32 (GSFCHPPLLLLIVAIQFLVIY) form a helical; Signal-anchor for type II membrane protein membrane-spanning segment. Over 33–465 (SPTLDQYMVM…VLLKALHLLR (433 aa)) the chain is Lumenal. 5 N-linked (GlcNAc...) asparagine glycosylation sites follow: Asn80, Asn118, Asn125, Asn266, and Asn403.

The protein belongs to the glycosyltransferase 61 family. Widely expressed.

Its subcellular location is the golgi apparatus membrane. It functions in the pathway glycan metabolism. Glycosyltransferase involved in the xylosylation of xylan, the major hemicellulose (non-cellulosic component) of primary and secondary walls of angiosperms. Possesses beta-1,2-xylosyltransferase activity, transferring xylose from UDP-xylose to the xylan backbone. Catalyzes the addition of 2-O-xylosyl side chains to the xylan backbone. This is Beta-1,2-xylosyltransferase XYXT1 from Oryza sativa subsp. japonica (Rice).